Consider the following 437-residue polypeptide: GTPase Der (437 aa).

2 EngA-type G domains span residues 4–168 (PVVA…PAED) and 177–352 (IRVS…QAHS). GTP is bound by residues 10-17 (GRPNVGKS), 57-61 (DTGGI), 120-123 (NKAD), 183-190 (GRPNVGKS), 230-234 (DTAGM), and 295-298 (NKWD). In terms of domain architecture, KH-like spans 353–437 (MRIPTAVLND…PVRIWTRKKT (85 aa)).

It belongs to the TRAFAC class TrmE-Era-EngA-EngB-Septin-like GTPase superfamily. EngA (Der) GTPase family. As to quaternary structure, associates with the 50S ribosomal subunit.

Its function is as follows. GTPase that plays an essential role in the late steps of ribosome biogenesis. The polypeptide is GTPase Der (Brevibacillus brevis (strain 47 / JCM 6285 / NBRC 100599)).